The primary structure comprises 121 residues: Small ribosomal subunit protein uS13 (121 aa).

A disordered region spans residues 94 to 121; sequence GLPVRGQNTKNNARTRKGPRRTVANKKK. Positions 106–121 are enriched in basic residues; sequence ARTRKGPRRTVANKKK.

This sequence belongs to the universal ribosomal protein uS13 family. As to quaternary structure, part of the 30S ribosomal subunit. Forms a loose heterodimer with protein S19. Forms two bridges to the 50S subunit in the 70S ribosome.

Located at the top of the head of the 30S subunit, it contacts several helices of the 16S rRNA. In the 70S ribosome it contacts the 23S rRNA (bridge B1a) and protein L5 of the 50S subunit (bridge B1b), connecting the 2 subunits; these bridges are implicated in subunit movement. Contacts the tRNAs in the A and P-sites. In Geobacillus kaustophilus (strain HTA426), this protein is Small ribosomal subunit protein uS13.